We begin with the raw amino-acid sequence, 818 residues long: Glycogen phosphorylase (818 aa).

N6-(pyridoxal phosphate)lysine is present on K667.

It belongs to the glycogen phosphorylase family. Requires pyridoxal 5'-phosphate as cofactor.

The enzyme catalyses [(1-&gt;4)-alpha-D-glucosyl](n) + phosphate = [(1-&gt;4)-alpha-D-glucosyl](n-1) + alpha-D-glucose 1-phosphate. In terms of biological role, phosphorylase is an important allosteric enzyme in carbohydrate metabolism. Enzymes from different sources differ in their regulatory mechanisms and in their natural substrates. However, all known phosphorylases share catalytic and structural properties. The polypeptide is Glycogen phosphorylase (glgP) (Pasteurella multocida (strain Pm70)).